A 158-amino-acid chain; its full sequence is MSSKEQEAQKGKQGWITPAVIPPEEWGTFRYRGKTLEELLNLPMDEFIKLLPARQRRSLKRGLKPEHRKLLEKIRKAKRLAAQGKKVTIKTHSRDMIILPEMVGLTIHVYNGITYIPVFISPWHIGHYLGEFALTTKVVQHGEPGLKATRSSLHIAAK.

It belongs to the universal ribosomal protein uS19 family.

In terms of biological role, protein S19 forms a complex with S13 that binds strongly to the 16S ribosomal RNA. This is Small ribosomal subunit protein uS19 from Pyrobaculum neutrophilum (strain DSM 2338 / JCM 9278 / NBRC 100436 / V24Sta) (Thermoproteus neutrophilus).